A 239-amino-acid chain; its full sequence is Bidirectional sugar transporter SWEET8 (239 aa).

The Extracellular portion of the chain corresponds to methionine 1–glutamine 6. A helical membrane pass occupies residues valine 7–alanine 27. The region spanning phenylalanine 9–lysine 98 is the MtN3/slv 1 domain. The Cytoplasmic portion of the chain corresponds to lysine 28–tyrosine 44. Residues valine 45–valine 65 traverse the membrane as a helical segment. Residues histidine 66–serine 69 are Extracellular-facing. Residues isoleucine 70–tyrosine 90 traverse the membrane as a helical segment. Over leucine 91 to asparagine 103 the chain is Cytoplasmic. The helical transmembrane segment at isoleucine 104 to phenylalanine 124 threads the bilayer. The Extracellular segment spans residues alanine 125–phenylalanine 135. Positions threonine 134–tyrosine 185 constitute a MtN3/slv 2 domain. Residues valine 136 to isoleucine 156 form a helical membrane-spanning segment. At lysine 157 to proline 168 the chain is on the cytoplasmic side. A helical membrane pass occupies residues phenylalanine 169 to phenylalanine 189. Over lysine 190–tyrosine 194 the chain is Extracellular. A helical membrane pass occupies residues valine 195–methionine 215. Residues tyrosine 216–valine 239 are Cytoplasmic-facing.

This sequence belongs to the SWEET sugar transporter family. As to quaternary structure, forms homooligomers and heterooligomers with SWEET4, SWEET5, SWEET6, SWEET7, SWEET9, SWEET10, SWEET11, SWEET13, SWEET15, SWEET16 and SWEET17. As to expression, expressed in inflorescences, embryo sacs and pollen, and at a lower level in stems. Barely detected in roots, leaves and seedlings.

Its subcellular location is the cell membrane. In terms of biological role, mediates both low-affinity uptake and efflux of sugar across the plasma membrane. Required, in pollen, for microspore cell integrity and primexine pattern formation. The polypeptide is Bidirectional sugar transporter SWEET8 (Arabidopsis thaliana (Mouse-ear cress)).